A 190-amino-acid polypeptide reads, in one-letter code: dITP/XTP pyrophosphatase (190 aa).

Residue 7-12 (SNNKNK) participates in substrate binding. The active-site Proton acceptor is aspartate 68. Aspartate 68 serves as a coordination point for Mg(2+). Substrate-binding positions include threonine 69, 148 to 151 (FGYD), lysine 171, and 176 to 177 (HR).

It belongs to the HAM1 NTPase family. In terms of assembly, homodimer. Requires Mg(2+) as cofactor.

It catalyses the reaction XTP + H2O = XMP + diphosphate + H(+). The enzyme catalyses dITP + H2O = dIMP + diphosphate + H(+). It carries out the reaction ITP + H2O = IMP + diphosphate + H(+). In terms of biological role, pyrophosphatase that catalyzes the hydrolysis of nucleoside triphosphates to their monophosphate derivatives, with a high preference for the non-canonical purine nucleotides XTP (xanthosine triphosphate), dITP (deoxyinosine triphosphate) and ITP. Seems to function as a house-cleaning enzyme that removes non-canonical purine nucleotides from the nucleotide pool, thus preventing their incorporation into DNA/RNA and avoiding chromosomal lesions. This is dITP/XTP pyrophosphatase from Flavobacterium psychrophilum (strain ATCC 49511 / DSM 21280 / CIP 103535 / JIP02/86).